The sequence spans 406 residues: Argininosuccinate synthase (406 aa).

Residues 11-19 (AYSGGLDTS) and A38 contribute to the ATP site. Y91 and S96 together coordinate L-citrulline. G121 is a binding site for ATP. L-aspartate contacts are provided by T123, N127, and D128. N127 is an L-citrulline binding site. The L-citrulline site is built by R131, S181, S190, E266, and Y278.

Belongs to the argininosuccinate synthase family. Type 1 subfamily. In terms of assembly, homotetramer.

It is found in the cytoplasm. It carries out the reaction L-citrulline + L-aspartate + ATP = 2-(N(omega)-L-arginino)succinate + AMP + diphosphate + H(+). It participates in amino-acid biosynthesis; L-arginine biosynthesis; L-arginine from L-ornithine and carbamoyl phosphate: step 2/3. The protein is Argininosuccinate synthase of Campylobacter jejuni subsp. doylei (strain ATCC BAA-1458 / RM4099 / 269.97).